A 93-amino-acid chain; its full sequence is Putative pterin-4-alpha-carbinolamine dehydratase (93 aa).

Belongs to the pterin-4-alpha-carbinolamine dehydratase family.

The enzyme catalyses (4aS,6R)-4a-hydroxy-L-erythro-5,6,7,8-tetrahydrobiopterin = (6R)-L-erythro-6,7-dihydrobiopterin + H2O. The chain is Putative pterin-4-alpha-carbinolamine dehydratase from Synechococcus sp. (strain WH7803).